An 83-amino-acid polypeptide reads, in one-letter code: Large ribosomal subunit protein bL31B (83 aa).

Belongs to the bacterial ribosomal protein bL31 family. Type B subfamily. In terms of assembly, part of the 50S ribosomal subunit.

The sequence is that of Large ribosomal subunit protein bL31B from Bacteroides fragilis (strain ATCC 25285 / DSM 2151 / CCUG 4856 / JCM 11019 / LMG 10263 / NCTC 9343 / Onslow / VPI 2553 / EN-2).